A 71-amino-acid polypeptide reads, in one-letter code: 7.9 kDa protein (71 aa).

The chain is 7.9 kDa protein from Pseudomonas aeruginosa (Bacteriophage Pf3).